The primary structure comprises 190 residues: MPSIHPSIDNGITKGDPNFKGGKLYCHCPTRKVEVTLAGNVAHNHACGCSKCWKPEGALFSVVGVISKDAVSVTANGDKLHIVDESAAIQRNACKECGVHLFGRIIVDHPFKGLDFVHAELSPQKGWQEPQFAAFVSSIIEQGFHPSEMDAIREKFRKVGLQPYDVLSPTLMDLIATYTAQKSGKLPAKL.

The region spanning 19 to 165 (FKGGKLYCHC…FRKVGLQPYD (147 aa)) is the CENP-V/GFA domain. Zn(2+) contacts are provided by C26, C28, C47, C49, C52, C94, and C97.

This sequence belongs to the Gfa family. Zn(2+) is required as a cofactor.

It catalyses the reaction S-(hydroxymethyl)glutathione = glutathione + formaldehyde. Its pathway is one-carbon metabolism; formaldehyde degradation; formate from formaldehyde (glutathione route): step 1/3. Functionally, catalyzes the condensation of formaldehyde and glutathione to S-hydroxymethylglutathione. This Pyrenophora teres f. teres (strain 0-1) (Barley net blotch fungus) protein is Putative glutathione-dependent formaldehyde-activating enzyme.